The primary structure comprises 324 residues: Protease HtpX homolog (324 aa).

A run of 2 helical transmembrane segments spans residues 7-24 (ALLLAGLTALFMGVGYLI) and 29-46 (GALIALVVAAAMNIFTYW). His130 provides a ligand contact to Zn(2+). Glu131 is an active-site residue. Residue His134 coordinates Zn(2+). 2 helical membrane passes run 145 to 165 (ITATIAGAISMVAQFGMFFGG) and 172 to 192 (GPGLIGSLALMILAPLGAMLV). Zn(2+) is bound at residue Glu201. Residues 288 to 305 (PASTFSRGAGTAASSGTP) are compositionally biased toward polar residues. Positions 288–324 (PASTFSRGAGTAASSGTPRGTGRSPWGGQPRGRGPWG) are disordered.

This sequence belongs to the peptidase M48B family. The cofactor is Zn(2+).

The protein resides in the cell inner membrane. This Rhodopseudomonas palustris (strain TIE-1) protein is Protease HtpX homolog.